A 336-amino-acid polypeptide reads, in one-letter code: Anthranilate phosphoribosyltransferase (336 aa).

Residues glycine 82, 85–86 (GD), threonine 90, 92–95 (NIST), 110–118 (KHGNRSVSS), and serine 122 contribute to the 5-phospho-alpha-D-ribose 1-diphosphate site. Glycine 82 lines the anthranilate pocket. A Mg(2+)-binding site is contributed by serine 94. Asparagine 113 serves as a coordination point for anthranilate. Position 168 (arginine 168) interacts with anthranilate. Mg(2+) contacts are provided by aspartate 227 and glutamate 228.

Belongs to the anthranilate phosphoribosyltransferase family. In terms of assembly, homodimer. Mg(2+) is required as a cofactor.

The catalysed reaction is N-(5-phospho-beta-D-ribosyl)anthranilate + diphosphate = 5-phospho-alpha-D-ribose 1-diphosphate + anthranilate. It functions in the pathway amino-acid biosynthesis; L-tryptophan biosynthesis; L-tryptophan from chorismate: step 2/5. Functionally, catalyzes the transfer of the phosphoribosyl group of 5-phosphorylribose-1-pyrophosphate (PRPP) to anthranilate to yield N-(5'-phosphoribosyl)-anthranilate (PRA). This Leptospira interrogans serogroup Icterohaemorrhagiae serovar Lai (strain 56601) protein is Anthranilate phosphoribosyltransferase.